The sequence spans 718 residues: Catalase (718 aa).

Catalysis depends on residues H103 and N176. Y390 lines the heme pocket.

This sequence belongs to the catalase family. It depends on heme as a cofactor.

It is found in the peroxisome matrix. The enzyme catalyses 2 H2O2 = O2 + 2 H2O. Functionally, catalyzes the degradation of hydrogen peroxide (H(2)O(2)) generated by peroxisomal oxidases to water and oxygen, thereby protecting cells from the toxic effects of hydrogen peroxide. This Blumeria hordei (Barley powdery mildew) protein is Catalase (CAT1).